A 242-amino-acid chain; its full sequence is Phosphoribosyl isomerase A (242 aa).

Asp-12 acts as the Proton acceptor in catalysis. Catalysis depends on Asp-131, which acts as the Proton donor.

This sequence belongs to the HisA/HisF family.

Its subcellular location is the cytoplasm. The enzyme catalyses 1-(5-phospho-beta-D-ribosyl)-5-[(5-phospho-beta-D-ribosylamino)methylideneamino]imidazole-4-carboxamide = 5-[(5-phospho-1-deoxy-D-ribulos-1-ylimino)methylamino]-1-(5-phospho-beta-D-ribosyl)imidazole-4-carboxamide. The catalysed reaction is N-(5-phospho-beta-D-ribosyl)anthranilate = 1-(2-carboxyphenylamino)-1-deoxy-D-ribulose 5-phosphate. It functions in the pathway amino-acid biosynthesis; L-histidine biosynthesis; L-histidine from 5-phospho-alpha-D-ribose 1-diphosphate: step 4/9. The protein operates within amino-acid biosynthesis; L-tryptophan biosynthesis; L-tryptophan from chorismate: step 3/5. Involved in both the histidine and tryptophan biosynthetic pathways. The chain is Phosphoribosyl isomerase A from Streptomyces avermitilis (strain ATCC 31267 / DSM 46492 / JCM 5070 / NBRC 14893 / NCIMB 12804 / NRRL 8165 / MA-4680).